Reading from the N-terminus, the 507-residue chain is MDSGSSSSSSSSGSSSGSCSTSGSGSTSGSSTTSSSSSSSSSSSSSSSSSSKEYMPELPKQRKASCVVIDSESDSDNTSDEKNTTVCEISSGDETSDIDRPGGQKLPLIVIDDDDDGSPDLKNTKQKSDEPQMSVLEKEGVECIGSDSTSPHDVCEIWDVCGSSNQTSSELEPEGEPESEAKGEPESEAKGEPESEAKGEPESEAKGESESEAKGEMETEAKGESESEAKGEMETEAKGESESEAKGEMETEAKGEPESEAKGEMETEAKGEPESEAKGEMETEAKGESESEAKGEMETEAKGESESEAKGEMETEAKGEPESEAKGEMETEAKGEPESEAKGEPEPEAAKGEMETEAAMGEVETEAAMGEPEQEITAEEAKKKRAAYLLAQQRKRKRKNRFICMSSSKPRRKRRRADPQDGADPQDGADPQDRADPQDLADPQDRGDSQDMPSLPGTSDEPIPSGQPVCPRKGMASSRGRGRGRGRGRGRGRGRGRGRGRGAKAGK.

The segment covering 1 to 51 (MDSGSSSSSSSSGSSSGSCSTSGSGSTSGSSTTSSSSSSSSSSSSSSSSSS) has biased composition (low complexity). Residues 1–507 (MDSGSSSSSS…GRGRGAKAGK (507 aa)) are disordered. Short sequence motifs (SUMO interaction motif 1 (SIM)) lie at residues 12-15 (SGSS), 66-69 (CVVI), 86-89 (VCEI), and 108-111 (LIVI). 3 stretches are compositionally biased toward basic and acidic residues: residues 122–141 (KNTK…KEGV), 179–354 (SEAK…KGEM), and 431–449 (PQDR…RGDS). Residues 480 to 507 (GRGRGRGRGRGRGRGRGRGRGRGAKAGK) are compositionally biased toward basic residues.

The protein belongs to the serine-aspartate repeat-containing protein (SDr) family. In terms of assembly, interacts (via SIM domains) with SUMO2; this interaction allows the GCNA recruitment to DPCs sites. Interacts with TOP2A; this interaction allows the resolution of topoisomerase II (TOP2A) DNA-protein cross-links. Germ-cells specific.

The protein resides in the chromosome. The protein localises to the nucleus. It is found in the PML body. May play a role in DNA-protein cross-links (DPCs) clearance through a SUMO-dependent recruitment to sites of DPCs, ensuring the genomic stability by protecting germ cells and early embryos from various sources of damage. Can resolve the topoisomerase II (TOP2A) DPCs. The polypeptide is Germ cell nuclear acidic protein (Mus musculus (Mouse)).